A 551-amino-acid polypeptide reads, in one-letter code: Membrane protein insertase YidC (551 aa).

The chain crosses the membrane as a helical span at residues 3 to 23 (ANHIRILLLVTIAIMFISLMG). The tract at residues 33 to 55 (NTKQQTSATQNNSHYDNADSSTN) is disordered. 3 helical membrane-spanning segments follow: residues 361 to 381 (LVGNWGLAIILVTCLIKLIFY), 431 to 451 (LSGCLPMLIQIPIFISLYWVL), and 504 to 524 (VMMFLPVIFTFLFASFPSGLV).

The protein belongs to the OXA1/ALB3/YidC family. Type 1 subfamily. Interacts with the Sec translocase complex via SecD. Specifically interacts with transmembrane segments of nascent integral membrane proteins during membrane integration.

The protein resides in the cell inner membrane. Functionally, required for the insertion and/or proper folding and/or complex formation of integral membrane proteins into the membrane. Involved in integration of membrane proteins that insert both dependently and independently of the Sec translocase complex, as well as at least some lipoproteins. Aids folding of multispanning membrane proteins. The protein is Membrane protein insertase YidC of Francisella tularensis subsp. holarctica (strain OSU18).